A 209-amino-acid polypeptide reads, in one-letter code: Peptide methionine sulfoxide reductase MsrA (209 aa).

Residue C51 is part of the active site.

The protein belongs to the MsrA Met sulfoxide reductase family.

It carries out the reaction L-methionyl-[protein] + [thioredoxin]-disulfide + H2O = L-methionyl-(S)-S-oxide-[protein] + [thioredoxin]-dithiol. It catalyses the reaction [thioredoxin]-disulfide + L-methionine + H2O = L-methionine (S)-S-oxide + [thioredoxin]-dithiol. In terms of biological role, has an important function as a repair enzyme for proteins that have been inactivated by oxidation. Catalyzes the reversible oxidation-reduction of methionine sulfoxide in proteins to methionine. This chain is Peptide methionine sulfoxide reductase MsrA, found in Vibrio vulnificus (strain CMCP6).